The primary structure comprises 210 residues: Ras-related protein Rab-8 (210 aa).

15–22 contacts GTP; that stretch reads GDSGVGKT. Residues 37–45 carry the Effector region motif; it reads FISTIGIDF. Residues 63-67 and 121-124 each bind GTP; these read DTAGQ and NKCD. The residue at position 207 (C207) is a Cysteine methyl ester. C207 carries the S-geranylgeranyl cysteine lipid modification. Residues 208–210 constitute a propeptide, removed in mature form; it reads SLL.

It belongs to the small GTPase superfamily. Rab family.

Its subcellular location is the cell membrane. The chain is Ras-related protein Rab-8 from Diplobatis ommata (Ocellated electric ray).